Reading from the N-terminus, the 423-residue chain is UPF0229 protein Psyr_4632 (423 aa).

The interval 65 to 110 (HHGRGGKQTVVHPGNKEFTTGEHIARPQGGGGGKGPGKAGNSGEGM) is disordered. Residues 92-107 (QGGGGGKGPGKAGNSG) show a composition bias toward gly residues.

This sequence belongs to the UPF0229 family.

The sequence is that of UPF0229 protein Psyr_4632 from Pseudomonas syringae pv. syringae (strain B728a).